Here is a 771-residue protein sequence, read N- to C-terminus: ATP-dependent DNA helicase UvrD1 (771 aa).

The segment at methionine 1 to aspartate 21 is disordered. One can recognise a UvrD-like helicase ATP-binding domain in the interval aspartate 21 to threonine 311. ATP is bound by residues glycine 45 to alanine 50 and arginine 309. The region spanning glutamine 312–glycine 603 is the UvrD-like helicase C-terminal domain. The interval phenylalanine 691–arginine 716 is disordered.

It belongs to the helicase family. UvrD subfamily. Monomer. Requires Mg(2+) as cofactor.

The enzyme catalyses Couples ATP hydrolysis with the unwinding of duplex DNA by translocating in the 3'-5' direction.. It carries out the reaction ATP + H2O = ADP + phosphate + H(+). Its function is as follows. DNA-dependent ATPase, acting on dsDNA with a 3'-ssDNA tail, unwinding with 3'-to 5'-polarity. Also highly efficient on nicked DNA. Involved in the post-incision events of nucleotide excision repair. This chain is ATP-dependent DNA helicase UvrD1 (uvrD1), found in Mycobacterium bovis (strain ATCC BAA-935 / AF2122/97).